A 339-amino-acid chain; its full sequence is Sphingomyelinase D (339 aa).

Positions M1 to G21 are cleaved as a signal peptide. H60 is an active-site residue. Residues E80, D82, and D128 each contribute to the Mg(2+) site. The SMD-tail signature appears at A309–W316. The interval D313–H339 is disordered. Low complexity predominate over residues S317–S328.

Belongs to the sphingomyelinase D/phospholipase D family. The cofactor is Mg(2+).

It is found in the secreted. The enzyme catalyses a sphingomyelin + H2O = an N-acylsphing-4-enine 1-phosphate + choline + H(+). In terms of biological role, catalyzes the hydrolysis of sphingomyelin. Sphingomyelinases D are produced by some spider in their venoms, but also by arthropods such as ticks, or pathogenic bacteria and fungi. They might play a role in pathogenicity through different mechanisms, such as membrane destabilization and host cell penetration, but also pulmonary inflammation and cutaneous lesions. The sequence is that of Sphingomyelinase D from Arthroderma benhamiae (strain ATCC MYA-4681 / CBS 112371) (Trichophyton mentagrophytes).